Reading from the N-terminus, the 451-residue chain is Glycylpeptide N-tetradecanoyltransferase (451 aa).

Tetradecanoyl-CoA-binding positions include leucine 177–isoleucine 179 and asparagine 185–alanine 189. Leucine 451 serves as the catalytic Proton acceptor; via carboxylate.

Belongs to the NMT family. As to quaternary structure, monomer.

Its subcellular location is the cytoplasm. The enzyme catalyses N-terminal glycyl-[protein] + tetradecanoyl-CoA = N-tetradecanoylglycyl-[protein] + CoA + H(+). With respect to regulation, competitively inhibited by SC-58272, a peptidomimetic derived from the N-terminal sequence of a natural substrate. In terms of biological role, adds a myristoyl group to the N-terminal glycine residue of certain cellular proteins. Substrate specificity requires an N-terminal glycine in the nascent polypeptide substrates. Ser is present at position 5 in almost all known N-myristoyl proteins and Lys is commonly encountered at postion 6. Basic residues are preferred at positions 7 and 8. This chain is Glycylpeptide N-tetradecanoyltransferase (NMT1), found in Candida albicans (strain SC5314 / ATCC MYA-2876) (Yeast).